Consider the following 399-residue polypeptide: CCA-adding enzyme (399 aa).

Residues Gly32 and Arg35 each coordinate ATP. Gly32 and Arg35 together coordinate CTP. Mg(2+)-binding residues include Asp45 and Asp47. Residues Arg116, Asp159, Arg162, Arg165, and Arg168 each coordinate ATP. Residues Arg116, Asp159, Arg162, Arg165, and Arg168 each coordinate CTP.

This sequence belongs to the tRNA nucleotidyltransferase/poly(A) polymerase family. Bacterial CCA-adding enzyme type 3 subfamily. Homodimer. Mg(2+) is required as a cofactor.

It catalyses the reaction a tRNA precursor + 2 CTP + ATP = a tRNA with a 3' CCA end + 3 diphosphate. The catalysed reaction is a tRNA with a 3' CCA end + 2 CTP + ATP = a tRNA with a 3' CCACCA end + 3 diphosphate. In terms of biological role, catalyzes the addition and repair of the essential 3'-terminal CCA sequence in tRNAs without using a nucleic acid template. Adds these three nucleotides in the order of C, C, and A to the tRNA nucleotide-73, using CTP and ATP as substrates and producing inorganic pyrophosphate. tRNA 3'-terminal CCA addition is required both for tRNA processing and repair. Also involved in tRNA surveillance by mediating tandem CCA addition to generate a CCACCA at the 3' terminus of unstable tRNAs. While stable tRNAs receive only 3'-terminal CCA, unstable tRNAs are marked with CCACCA and rapidly degraded. The sequence is that of CCA-adding enzyme from Streptococcus pneumoniae serotype 4 (strain ATCC BAA-334 / TIGR4).